Reading from the N-terminus, the 65-residue chain is Large ribosomal subunit protein bL35 (65 aa).

The protein belongs to the bacterial ribosomal protein bL35 family.

In Prochlorococcus marinus subsp. pastoris (strain CCMP1986 / NIES-2087 / MED4), this protein is Large ribosomal subunit protein bL35.